Reading from the N-terminus, the 635-residue chain is Cell pattern formation-associated protein stuA (635 aa).

2 disordered regions span residues 1-21 and 63-82; these read MNQT…AQPY and SGVA…MSSQ. One can recognise an HTH APSES-type domain in the interval 129–235; it reads RVTATLWEDE…HNIGGLLYHP (107 aa). A DNA-binding region (H-T-H motif) is located at residues 163–184; it reads GTKLLNVAGMTRGRRDGILKSE. Disordered stretches follow at residues 246–480 and 498–635; these read QESQ…ASRS and SQLT…PRRR. Composition is skewed to low complexity over residues 276 to 294 and 312 to 325; these read MQTS…SSQP and SASS…QSSS. Polar residues predominate over residues 326 to 355; that stretch reads YDWNNQGMNSGVPNTQPLSIDTTLSNTRSM. Positions 356-380 are enriched in low complexity; the sequence is PTTPATTPPGNNLQGMQSYQSQSGY. The segment covering 460-469 has biased composition (basic and acidic residues); that stretch reads APEHESEYVQ. 2 stretches are compositionally biased toward polar residues: residues 498-513 and 539-571; these read SQLT…QNGS and AASS…TAPT. Positions 582–605 are nuclear localization domain; it reads KRGREDDDMGRPDSQGDYESKRRR. The span at 583–592 shows a compositional bias: basic and acidic residues; that stretch reads RGREDDDMGR.

Belongs to the EFG1/PHD1/stuA family.

In terms of biological role, transcription factor that regulates asexual reproduction. Binds the StuA-response elements (StRE) with the consensus sequence 5'-(A/T)CGCG(T/A)N(A/C)-3' at the promoters of target genes. Controls the expression of 6 secondary metabolite biosynthetic clusters including 2 involved in the synthesis of alkaloids (fumigaclavine and fumitremorgen), 2 clusters of the ETP class (gliotoxin and an unknown ETP-like toxin), a cluster predicted to produce pseurotin A, and the product of the last cluster is unknown. Controls the production of ergot alkaloids during conidiophore development. Controls expression of sspA and gliP. Involved in the induction of immunoglobulin E-independent mast cell degranulation. In Aspergillus fumigatus (strain ATCC MYA-4609 / CBS 101355 / FGSC A1100 / Af293) (Neosartorya fumigata), this protein is Cell pattern formation-associated protein stuA.